The following is a 127-amino-acid chain: Protein ApaG (127 aa).

In terms of domain architecture, ApaG spans 3–127; the sequence is KSETYRIEVE…FMLAMPRVLH (125 aa).

The protein is Protein ApaG of Azoarcus sp. (strain BH72).